We begin with the raw amino-acid sequence, 230 residues long: Phosducin-like protein 1 (230 aa).

N-acetylmethionine is present on M1. In terms of domain architecture, Phosducin spans 16–166 (AEKDKHTTVD…VVGYKNGLEK (151 aa)). The stretch at 25-79 (DSDDKSSGEENLDELLNELDRELDEDHEFLSAYRSERLQQISDHLKQVKKNVEDD) forms a coiled coil. Positions 81–230 (YGRLQCIDNE…RSESDSDLDI (150 aa)) are thioredoxin fold.

It belongs to the phosducin family. Interacts with the G protein beta-gamma subunit complex (STE4-STE18 complex).

It is found in the cytoplasm. In terms of biological role, not essential for growth. Inhibits early G-protein signaling events following pheromone stimulation. May help create heterodimerizable beta-tubulin by facilitating the efficient transfer of nascent beta-tubulin polypeptides to the folding apparatus. This is Phosducin-like protein 1 (PLP1) from Saccharomyces cerevisiae (strain ATCC 204508 / S288c) (Baker's yeast).